The following is a 333-amino-acid chain: B3 domain-containing protein At1g32030 (333 aa).

Polar residues-rich tracts occupy residues 76 to 99 and 134 to 143; these read VTVRNPEQNQQNLHRVSTSSSLLD and PQNASSSSTL. The tract at residues 76–179 is disordered; that stretch reads VTVRNPEQNQ…SEPKKAKTPY (104 aa). Positions 220-328 form a DNA-binding region, TF-B3; it reads QSRLLMPFNT…ILSFALVLPP (109 aa).

It is found in the nucleus. The chain is B3 domain-containing protein At1g32030 from Arabidopsis thaliana (Mouse-ear cress).